The following is a 381-amino-acid chain: Queuine tRNA-ribosyltransferase (381 aa).

The active-site Proton acceptor is D96. Substrate contacts are provided by residues 96-100 (DSGGF), D150, Q193, and G220. Residues 251 to 257 (GVGAPDS) are RNA binding. The active-site Nucleophile is the D270. The interval 275–279 (TRIAR) is RNA binding; important for wobble base 34 recognition. Zn(2+) is bound by residues C308, C310, C313, and H339.

Belongs to the queuine tRNA-ribosyltransferase family. In terms of assembly, homodimer. Within each dimer, one monomer is responsible for RNA recognition and catalysis, while the other monomer binds to the replacement base PreQ1. The cofactor is Zn(2+).

The catalysed reaction is 7-aminomethyl-7-carbaguanine + guanosine(34) in tRNA = 7-aminomethyl-7-carbaguanosine(34) in tRNA + guanine. It functions in the pathway tRNA modification; tRNA-queuosine biosynthesis. Its function is as follows. Catalyzes the base-exchange of a guanine (G) residue with the queuine precursor 7-aminomethyl-7-deazaguanine (PreQ1) at position 34 (anticodon wobble position) in tRNAs with GU(N) anticodons (tRNA-Asp, -Asn, -His and -Tyr). Catalysis occurs through a double-displacement mechanism. The nucleophile active site attacks the C1' of nucleotide 34 to detach the guanine base from the RNA, forming a covalent enzyme-RNA intermediate. The proton acceptor active site deprotonates the incoming PreQ1, allowing a nucleophilic attack on the C1' of the ribose to form the product. After dissociation, two additional enzymatic reactions on the tRNA convert PreQ1 to queuine (Q), resulting in the hypermodified nucleoside queuosine (7-(((4,5-cis-dihydroxy-2-cyclopenten-1-yl)amino)methyl)-7-deazaguanosine). The sequence is that of Queuine tRNA-ribosyltransferase from Enterococcus faecalis (strain ATCC 700802 / V583).